A 73-amino-acid chain; its full sequence is MQIQQMLENRIEELEMKIAFQEQLLDELNHALVQQQFDIDKMQVQLRYMANKLKDFQPSNIASQSEETPPPHY.

This sequence belongs to the SlyX family.

The sequence is that of Protein SlyX homolog from Haemophilus influenzae (strain PittEE).